The sequence spans 188 residues: MKAGALELGHASKTTKSGVNRGMSILDLFIRIIAIIATLGSAIAMGTTNETLPFFTQFVRFKAKYSDLPTFTFFVVANAIVSAYLVLSLGLSIYHIMRSRAQATRIALIFFDAAMLGLLTGGASASAAIVYLAHKGNRKTNWFPICQQYDSFCHRTSGSLVGSFAGSVLIILLIFLSAIALSRQSLNH.

Topologically, residues 1–24 (MKAGALELGHASKTTKSGVNRGMS) are cytoplasmic. The chain crosses the membrane as a helical span at residues 25 to 45 (ILDLFIRIIAIIATLGSAIAM). Over 46–72 (GTTNETLPFFTQFVRFKAKYSDLPTFT) the chain is Extracellular. Residue asparagine 49 is glycosylated (N-linked (GlcNAc...) asparagine). The chain crosses the membrane as a helical span at residues 73–93 (FFVVANAIVSAYLVLSLGLSI). Residues 94–105 (YHIMRSRAQATR) are Cytoplasmic-facing. The chain crosses the membrane as a helical span at residues 106 to 126 (IALIFFDAAMLGLLTGGASAS). At 127-159 (AAIVYLAHKGNRKTNWFPICQQYDSFCHRTSGS) the chain is on the extracellular side. Residues 160–180 (LVGSFAGSVLIILLIFLSAIA) traverse the membrane as a helical segment. Over 181–188 (LSRQSLNH) the chain is Cytoplasmic.

It belongs to the Casparian strip membrane proteins (CASP) family. As to quaternary structure, homodimer and heterodimers.

The protein resides in the cell membrane. Regulates membrane-cell wall junctions and localized cell wall deposition. Required for establishment of the Casparian strip membrane domain (CSD) and the subsequent formation of Casparian strips, a cell wall modification of the root endodermis that determines an apoplastic barrier between the intraorganismal apoplasm and the extraorganismal apoplasm and prevents lateral diffusion. The protein is Casparian strip membrane protein 1 of Solanum tuberosum (Potato).